The following is a 168-amino-acid chain: MQMKFRGRVWKFGDNVDTDQIIPARYLNTSDPYELAKHVMEDSEHPEFAKEHKEGDIIVAGKNFGSGSSREHAPIAIKYSGVPVVIAKSFARIFFRNAINIGLPIVEAPEAVDEIEHGDEIEVDLEKGVIKNLRTGKEYQATKFPKELQDILKAGGLMAYAKEKLASK.

Belongs to the LeuD family. LeuD type 2 subfamily. In terms of assembly, heterodimer of LeuC and LeuD.

The catalysed reaction is (2R,3S)-3-isopropylmalate = (2S)-2-isopropylmalate. It participates in amino-acid biosynthesis; L-leucine biosynthesis; L-leucine from 3-methyl-2-oxobutanoate: step 2/4. Catalyzes the isomerization between 2-isopropylmalate and 3-isopropylmalate, via the formation of 2-isopropylmaleate. The protein is 3-isopropylmalate dehydratase small subunit (leuD) of Aquifex aeolicus (strain VF5).